The sequence spans 203 residues: uncharacterized protein (203 aa).

Helical transmembrane passes span 9-29, 42-62, 86-106, and 126-146; these read YNVF…IVVA, FLFL…FFDV, SGVF…ALLV, and YPLL…SIGL. Basic and acidic residues-rich tracts occupy residues 164-174 and 182-191; these read GEPTAADKTDS and DQTKSKKDGD. The tract at residues 164–203 is disordered; sequence GEPTAADKTDSRPVVVDLDQTKSKKDGDNPPQASGDMTSL. Over residues 194–203 the composition is skewed to polar residues; that stretch reads PQASGDMTSL.

The protein localises to the cell membrane. This is an uncharacterized protein from Mycoplasma pneumoniae (strain ATCC 29342 / M129 / Subtype 1) (Mycoplasmoides pneumoniae).